The primary structure comprises 701 residues: Protein SOSEKI 1 (701 aa).

The segment at 8–101 is DIX-like oligomerization domain; it reads LSAQVLYQLS…YVLRASELID (94 aa). Disordered regions lie at residues 238 to 262, 300 to 329, 366 to 389, and 538 to 575; these read STVH…FSPG, LPPN…SLNE, PYNT…YRTK, and IASS…LASP. The segment covering 306-319 has biased composition (basic and acidic residues); sequence STHEDNSFWRDSRS. A C2HC/C3H-type zinc finger spans residues 658-687; it reads ILQECSICRRTFKPDSLQVHMRGCHPPQYA. Positions 662, 665, 677, and 681 each coordinate Zn(2+).

Belongs to the SOSEKI family. As to quaternary structure, homodimer. Forms long polymer filaments with other SOKs proteins polymers crucial for polar localization and biological activity. The cofactor is Zn(2+).

The protein resides in the cell membrane. Its function is as follows. SOSEKI proteins locally interpret global polarity cues and can influence cell division orientation to coordinate cell polarization relative to body axes. This Physcomitrium patens (Spreading-leaved earth moss) protein is Protein SOSEKI 1.